A 181-amino-acid chain; its full sequence is MDIETANALTAFTARYCDAWHEMNGTWPQSEELYGVPSPCIITTMDDKILWQPQPFSLEQTVNAVERAMDIVVQPAVHAFYTTQFAGDMQARFANETMTLLQTWSENDFQRVQENLIGHLVTQKRLKLAPTLFIATLDSELDVIAVCNLNGEVIKETLGTRKRDVLAPSLADFLNQLEPVL.

It belongs to the Syd family.

It localises to the cell inner membrane. Interacts with the SecY protein in vivo. May bind preferentially to an uncomplexed state of SecY, thus functioning either as a chelating agent for excess SecY in the cell or as a regulatory factor that negatively controls the translocase function. The chain is Protein Syd from Enterobacter sp. (strain 638).